A 475-amino-acid polypeptide reads, in one-letter code: Ribulose bisphosphate carboxylase large chain (475 aa).

A propeptide spanning residues Met-1–Ser-2 is cleaved from the precursor. Residue Pro-3 is modified to N-acetylproline. Residue Lys-14 is modified to N6,N6,N6-trimethyllysine. The substrate site is built by Asn-123 and Thr-173. The active-site Proton acceptor is Lys-175. Lys-177 lines the substrate pocket. The Mg(2+) site is built by Lys-201, Asp-203, and Glu-204. Residue Lys-201 is modified to N6-carboxylysine. His-294 serves as the catalytic Proton acceptor. Substrate contacts are provided by Arg-295, His-327, and Ser-379.

It belongs to the RuBisCO large chain family. Type I subfamily. In terms of assembly, heterohexadecamer of 8 large chains and 8 small chains; disulfide-linked. The disulfide link is formed within the large subunit homodimers. The cofactor is Mg(2+). Post-translationally, the disulfide bond which can form in the large chain dimeric partners within the hexadecamer appears to be associated with oxidative stress and protein turnover.

Its subcellular location is the plastid. It is found in the chloroplast. The catalysed reaction is 2 (2R)-3-phosphoglycerate + 2 H(+) = D-ribulose 1,5-bisphosphate + CO2 + H2O. The enzyme catalyses D-ribulose 1,5-bisphosphate + O2 = 2-phosphoglycolate + (2R)-3-phosphoglycerate + 2 H(+). Functionally, ruBisCO catalyzes two reactions: the carboxylation of D-ribulose 1,5-bisphosphate, the primary event in carbon dioxide fixation, as well as the oxidative fragmentation of the pentose substrate in the photorespiration process. Both reactions occur simultaneously and in competition at the same active site. This is Ribulose bisphosphate carboxylase large chain from Lotus japonicus (Lotus corniculatus var. japonicus).